A 946-amino-acid chain; its full sequence is Bifunctional glutamine synthetase adenylyltransferase/adenylyl-removing enzyme (946 aa).

The tract at residues 1-440 is adenylyl removase; sequence MKPLSSPLQQ…VFNELIGDDE (440 aa). The adenylyl transferase stretch occupies residues 449-946; the sequence is SEQWRELWQD…ASWQKWLVEE (498 aa).

The protein belongs to the GlnE family. Requires Mg(2+) as cofactor.

It carries out the reaction [glutamine synthetase]-O(4)-(5'-adenylyl)-L-tyrosine + phosphate = [glutamine synthetase]-L-tyrosine + ADP. The enzyme catalyses [glutamine synthetase]-L-tyrosine + ATP = [glutamine synthetase]-O(4)-(5'-adenylyl)-L-tyrosine + diphosphate. Its function is as follows. Involved in the regulation of glutamine synthetase GlnA, a key enzyme in the process to assimilate ammonia. When cellular nitrogen levels are high, the C-terminal adenylyl transferase (AT) inactivates GlnA by covalent transfer of an adenylyl group from ATP to specific tyrosine residue of GlnA, thus reducing its activity. Conversely, when nitrogen levels are low, the N-terminal adenylyl removase (AR) activates GlnA by removing the adenylyl group by phosphorolysis, increasing its activity. The regulatory region of GlnE binds the signal transduction protein PII (GlnB) which indicates the nitrogen status of the cell. This Escherichia coli O9:H4 (strain HS) protein is Bifunctional glutamine synthetase adenylyltransferase/adenylyl-removing enzyme.